The primary structure comprises 230 residues: Cytochrome c oxidase subunit 2 (230 aa).

Residues 1 to 14 lie on the Mitochondrial intermembrane side of the membrane; the sequence is MAHPSQLGFQDAAS. The chain crosses the membrane as a helical span at residues 15–45; it reads PVMEELLHFHDHTLMIVFLISTLVLYIIMAM. The Mitochondrial matrix portion of the chain corresponds to 46-59; sequence VSTKLTNKYILDSQ. Residues 60-87 traverse the membrane as a helical segment; sequence EIEIVWTILPAVILIMIALPSLRILYLM. Over 88–230 the chain is Mitochondrial intermembrane; it reads DEINDPHLTI…SWSSLMLEEA (143 aa). Cu cation is bound by residues His161, Cys196, Glu198, Cys200, His204, and Met207. Glu198 provides a ligand contact to Mg(2+).

This sequence belongs to the cytochrome c oxidase subunit 2 family. In terms of assembly, component of the cytochrome c oxidase (complex IV, CIV), a multisubunit enzyme composed of 14 subunits. The complex is composed of a catalytic core of 3 subunits MT-CO1, MT-CO2 and MT-CO3, encoded in the mitochondrial DNA, and 11 supernumerary subunits COX4I, COX5A, COX5B, COX6A, COX6B, COX6C, COX7A, COX7B, COX7C, COX8 and NDUFA4, which are encoded in the nuclear genome. The complex exists as a monomer or a dimer and forms supercomplexes (SCs) in the inner mitochondrial membrane with NADH-ubiquinone oxidoreductase (complex I, CI) and ubiquinol-cytochrome c oxidoreductase (cytochrome b-c1 complex, complex III, CIII), resulting in different assemblies (supercomplex SCI(1)III(2)IV(1) and megacomplex MCI(2)III(2)IV(2)). Found in a complex with TMEM177, COA6, COX18, COX20, SCO1 and SCO2. Interacts with TMEM177 in a COX20-dependent manner. Interacts with COX20. Interacts with COX16. Requires Cu cation as cofactor.

It localises to the mitochondrion inner membrane. It carries out the reaction 4 Fe(II)-[cytochrome c] + O2 + 8 H(+)(in) = 4 Fe(III)-[cytochrome c] + 2 H2O + 4 H(+)(out). In terms of biological role, component of the cytochrome c oxidase, the last enzyme in the mitochondrial electron transport chain which drives oxidative phosphorylation. The respiratory chain contains 3 multisubunit complexes succinate dehydrogenase (complex II, CII), ubiquinol-cytochrome c oxidoreductase (cytochrome b-c1 complex, complex III, CIII) and cytochrome c oxidase (complex IV, CIV), that cooperate to transfer electrons derived from NADH and succinate to molecular oxygen, creating an electrochemical gradient over the inner membrane that drives transmembrane transport and the ATP synthase. Cytochrome c oxidase is the component of the respiratory chain that catalyzes the reduction of oxygen to water. Electrons originating from reduced cytochrome c in the intermembrane space (IMS) are transferred via the dinuclear copper A center (CU(A)) of subunit 2 and heme A of subunit 1 to the active site in subunit 1, a binuclear center (BNC) formed by heme A3 and copper B (CU(B)). The BNC reduces molecular oxygen to 2 water molecules using 4 electrons from cytochrome c in the IMS and 4 protons from the mitochondrial matrix. The sequence is that of Cytochrome c oxidase subunit 2 (MT-CO2) from Squalus acanthias (Spiny dogfish).